The primary structure comprises 863 residues: DNA mismatch repair protein MutS (863 aa).

615 to 622 is a binding site for ATP; sequence GPNMAGKS.

This sequence belongs to the DNA mismatch repair MutS family.

Functionally, this protein is involved in the repair of mismatches in DNA. It is possible that it carries out the mismatch recognition step. This protein has a weak ATPase activity. The polypeptide is DNA mismatch repair protein MutS (Pelotomaculum thermopropionicum (strain DSM 13744 / JCM 10971 / SI)).